The primary structure comprises 190 residues: Imidazoleglycerol-phosphate dehydratase (190 aa).

Belongs to the imidazoleglycerol-phosphate dehydratase family.

It localises to the cytoplasm. The catalysed reaction is D-erythro-1-(imidazol-4-yl)glycerol 3-phosphate = 3-(imidazol-4-yl)-2-oxopropyl phosphate + H2O. It participates in amino-acid biosynthesis; L-histidine biosynthesis; L-histidine from 5-phospho-alpha-D-ribose 1-diphosphate: step 6/9. This Sulfurovum sp. (strain NBC37-1) protein is Imidazoleglycerol-phosphate dehydratase.